Reading from the N-terminus, the 748-residue chain is Transcription factor FBD3 (748 aa).

A compositionally biased stretch (basic and acidic residues) spans 1–10; that stretch reads MPEQPRRPSD. A disordered region spans residues 1–26; the sequence is MPEQPRRPSDQEQNQSETGPPTNKRR. Residues 11–21 are compositionally biased toward polar residues; the sequence is QEQNQSETGPP. The zn(2)-C6 fungal-type DNA-binding region spans 32 to 59; sequence CNACRSRKSRCDGQRPSCSSCLSLGFDC. Disordered regions lie at residues 116 to 160 and 417 to 438; these read GTIN…EGIP and IPDE…TSGN. The segment covering 131–141 has biased composition (low complexity); the sequence is APTKASAPSGA. Polar residues predominate over residues 429–438; that stretch reads SGRSPATSGN.

It localises to the nucleus. In terms of biological role, transcription factor; part of the Fusarium detoxification of benzoxazolinone cluster 2 (FDB2) involved in the degradation of benzoxazolinones produced by the host plant. Maize, wheat, and rye produce the 2 benzoxazinone phytoanticipins 2,4-dihy-droxy-7-methoxy-1,4-benzoxazin-3-one (DIMBOA) and 2,4-dihydroxy-1,4-benzoxazin-3-one (DIBOA) that, due to their inherent instability once released, spontaneously degrade to the more stable corresponding benzoxazolinones, 6-methoxy-2-benzoxazolinone (MBOA) and 2-benzoxazolinone (BOA), respectively. FDB3 is not essentiel, but contributes to efficient BOA biotransformation. The sequence is that of Transcription factor FBD3 from Gibberella moniliformis (strain M3125 / FGSC 7600) (Maize ear and stalk rot fungus).